Here is an 893-residue protein sequence, read N- to C-terminus: Probable disease resistance protein At1g62630 (893 aa).

Positions 24–68 form a coiled coil; sequence GSYTHNLEKNLVALETTMEELKAKRDDLLRRLKREEDRGLQRLSE. Positions 136 to 440 constitute an NB-ARC domain; it reads TEQASTSAFE…CEEIIDGSEG (305 aa). 179 to 186 is a binding site for ATP; sequence GMGGVGKT. 6 LRR repeats span residues 516–537, 538–559, 571–593, 595–617, 618–640, and 641–663; these read VVRRMSLMGNKIHHLVGSYECM, ELTTLLLGEGEYGSIWRWSEIK, KLAVLDLSHNQSLFELPEEISNL, SLKYLNLSHTGIRHLSKGIQELK, KIIHLNLEHTSKLESIDGISSLH, and NLKVLKLYGSRLPWDLNTVKELE.

The protein belongs to the disease resistance NB-LRR family.

Probable disease resistance protein. In Arabidopsis thaliana (Mouse-ear cress), this protein is Probable disease resistance protein At1g62630.